Reading from the N-terminus, the 392-residue chain is Probable tRNA sulfurtransferase (392 aa).

The 108-residue stretch at 61–168 (DEALKLLSKV…EFTYIYSEII (108 aa)) folds into the THUMP domain. ATP is bound by residues 185-186 (LL), 210-211 (HF), R267, G289, and Q298.

This sequence belongs to the ThiI family.

It localises to the cytoplasm. It carries out the reaction [ThiI sulfur-carrier protein]-S-sulfanyl-L-cysteine + a uridine in tRNA + 2 reduced [2Fe-2S]-[ferredoxin] + ATP + H(+) = [ThiI sulfur-carrier protein]-L-cysteine + a 4-thiouridine in tRNA + 2 oxidized [2Fe-2S]-[ferredoxin] + AMP + diphosphate. The catalysed reaction is [ThiS sulfur-carrier protein]-C-terminal Gly-Gly-AMP + S-sulfanyl-L-cysteinyl-[cysteine desulfurase] + AH2 = [ThiS sulfur-carrier protein]-C-terminal-Gly-aminoethanethioate + L-cysteinyl-[cysteine desulfurase] + A + AMP + 2 H(+). It participates in cofactor biosynthesis; thiamine diphosphate biosynthesis. Catalyzes the ATP-dependent transfer of a sulfur to tRNA to produce 4-thiouridine in position 8 of tRNAs, which functions as a near-UV photosensor. Also catalyzes the transfer of sulfur to the sulfur carrier protein ThiS, forming ThiS-thiocarboxylate. This is a step in the synthesis of thiazole, in the thiamine biosynthesis pathway. The sulfur is donated as persulfide by IscS. The protein is Probable tRNA sulfurtransferase of Acetivibrio thermocellus (strain ATCC 27405 / DSM 1237 / JCM 9322 / NBRC 103400 / NCIMB 10682 / NRRL B-4536 / VPI 7372) (Clostridium thermocellum).